Consider the following 611-residue polypeptide: Acetylcholinesterase (611 aa).

The N-terminal stretch at 1–31 is a signal peptide; sequence MRPPWCPLYTPSLAAPILLLLLFLLGGGAEA. Cys-97 and Cys-124 are joined by a disulfide. The Acyl-ester intermediate role is filled by Ser-231. The cysteines at positions 285 and 300 are disulfide-linked. Residue Asn-293 is glycosylated (N-linked (GlcNAc...) asparagine). The active-site Charge relay system is Glu-362. Asn-378 carries N-linked (GlcNAc...) asparagine glycosylation. Cys-437 and Cys-557 are disulfide-bonded. His-475 functions as the Charge relay system in the catalytic mechanism. N-linked (GlcNAc...) asparagine glycosylation occurs at Asn-492.

It belongs to the type-B carboxylesterase/lipase family. In terms of assembly, interacts with PRIMA1. The interaction with PRIMA1 is required to anchor it to the basal lamina of cells and organize into tetramers. Isoform H generates GPI-anchored dimers; disulfide linked. Isoform T generates multiple structures, ranging from monomers and dimers to collagen-tailed and hydrophobic-tailed forms, in which catalytic tetramers are associated with anchoring proteins that attach them to the basal lamina or to cell membranes. In the collagen-tailed forms, isoform T subunits are associated with a specific collagen, COLQ, which triggers the formation of isoform T tetramers, from monomers and dimers.

Its subcellular location is the synapse. It localises to the secreted. The protein localises to the cell membrane. The catalysed reaction is acetylcholine + H2O = choline + acetate + H(+). Terminates signal transduction at the neuromuscular junction by rapid hydrolysis of the acetylcholine released into the synaptic cleft. This is Acetylcholinesterase (ACHE) from Felis catus (Cat).